A 526-amino-acid chain; its full sequence is Calcium-dependent protein kinase 28 (526 aa).

The interval 1 to 37 is disordered; that stretch reads MQPDPQPHGRGREKAAGAGPRLPPPVTAPSVGRPASV. Residues 49-307 enclose the Protein kinase domain; sequence YRIGKKLGQG…AHEVLCHPWI (259 aa). ATP is bound by residues 55-63 and lysine 78; that span reads LGQGQFGTT. Aspartate 173 (proton acceptor) is an active-site residue. The autoinhibitory domain stretch occupies residues 313–343; that stretch reads APDKPIDSAVLSRLKHFSAMNKLKKMALRVI. 4 EF-hand domains span residues 350–385, 386–421, 422–457, and 460–491; these read EEIGGLKELFKMIDTDNSGTITYDELKNGLKRVGSD, LMEPEIQALMDAADIDNSGTIDYGEFLAATLHMNKL, EREENLVSAFTFFDKDGSGFITIDELSQACEQFGLS, and HLEDMIKDVDQNNDGQIDYSEFAAMMRKGNAG. 19 residues coordinate Ca(2+): aspartate 363, aspartate 365, serine 367, threonine 369, glutamate 374, aspartate 399, aspartate 401, serine 403, threonine 405, glutamate 410, aspartate 435, aspartate 437, serine 439, glutamate 446, aspartate 469, asparagine 471, aspartate 473, glutamine 475, and glutamate 480.

The protein belongs to the protein kinase superfamily. Ser/Thr protein kinase family. CDPK subfamily.

The enzyme catalyses L-seryl-[protein] + ATP = O-phospho-L-seryl-[protein] + ADP + H(+). It catalyses the reaction L-threonyl-[protein] + ATP = O-phospho-L-threonyl-[protein] + ADP + H(+). With respect to regulation, activated by calcium. Autophosphorylation may play an important role in the regulation of the kinase activity. Its function is as follows. May play a role in signal transduction pathways that involve calcium as a second messenger. This chain is Calcium-dependent protein kinase 28, found in Oryza sativa subsp. japonica (Rice).